The primary structure comprises 293 residues: Ribosomal protein L11 methyltransferase (293 aa).

The S-adenosyl-L-methionine site is built by Thr-145, Gly-166, Asp-188, and Asn-230.

The protein belongs to the methyltransferase superfamily. PrmA family.

Its subcellular location is the cytoplasm. The catalysed reaction is L-lysyl-[protein] + 3 S-adenosyl-L-methionine = N(6),N(6),N(6)-trimethyl-L-lysyl-[protein] + 3 S-adenosyl-L-homocysteine + 3 H(+). In terms of biological role, methylates ribosomal protein L11. The sequence is that of Ribosomal protein L11 methyltransferase from Escherichia coli (strain SMS-3-5 / SECEC).